We begin with the raw amino-acid sequence, 168 residues long: ATP synthase subunit b (168 aa).

A helical transmembrane segment spans residues 10–30; the sequence is LYLGDMLFYLVSFLIMAALVW. The segment at 61–80 is disordered; that stretch reads EAQKLAAKRQEELKGSRQEA.

Belongs to the ATPase B chain family. As to quaternary structure, F-type ATPases have 2 components, F(1) - the catalytic core - and F(0) - the membrane proton channel. F(1) has five subunits: alpha(3), beta(3), gamma(1), delta(1), epsilon(1). F(0) has three main subunits: a(1), b(2) and c(10-14). The alpha and beta chains form an alternating ring which encloses part of the gamma chain. F(1) is attached to F(0) by a central stalk formed by the gamma and epsilon chains, while a peripheral stalk is formed by the delta and b chains.

Its subcellular location is the cell membrane. Functionally, f(1)F(0) ATP synthase produces ATP from ADP in the presence of a proton or sodium gradient. F-type ATPases consist of two structural domains, F(1) containing the extramembraneous catalytic core and F(0) containing the membrane proton channel, linked together by a central stalk and a peripheral stalk. During catalysis, ATP synthesis in the catalytic domain of F(1) is coupled via a rotary mechanism of the central stalk subunits to proton translocation. In terms of biological role, component of the F(0) channel, it forms part of the peripheral stalk, linking F(1) to F(0). This is ATP synthase subunit b from Limosilactobacillus fermentum (strain NBRC 3956 / LMG 18251) (Lactobacillus fermentum).